A 445-amino-acid chain; its full sequence is Serine protease inhibitor A3F (445 aa).

4 N-linked (GlcNAc...) asparagine glycosylation sites follow: Asn28, Asn94, Asn174, and Asn259. An RCL region spans residues Gly357–Tyr382.

This sequence belongs to the serpin family.

In Mus musculus (Mouse), this protein is Serine protease inhibitor A3F (Serpina3f).